We begin with the raw amino-acid sequence, 321 residues long: Ribose-phosphate pyrophosphokinase 1 (321 aa).

Residues D131, H133, D142, and D146 each contribute to the Mg(2+) site.

Belongs to the ribose-phosphate pyrophosphokinase family.

The enzyme catalyses D-ribose 5-phosphate + ATP = 5-phospho-alpha-D-ribose 1-diphosphate + AMP + H(+). This is Ribose-phosphate pyrophosphokinase 1 (PRS1) from Candida albicans (Yeast).